The chain runs to 222 residues: Ribosomal RNA small subunit methyltransferase G (222 aa).

S-adenosyl-L-methionine-binding positions include glycine 80, leucine 85, 131–132, and arginine 148; that span reads VE.

The protein belongs to the methyltransferase superfamily. RNA methyltransferase RsmG family.

The protein localises to the cytoplasm. The catalysed reaction is guanosine(527) in 16S rRNA + S-adenosyl-L-methionine = N(7)-methylguanosine(527) in 16S rRNA + S-adenosyl-L-homocysteine. In terms of biological role, specifically methylates the N7 position of guanine in position 527 of 16S rRNA. This chain is Ribosomal RNA small subunit methyltransferase G, found in Polynucleobacter asymbioticus (strain DSM 18221 / CIP 109841 / QLW-P1DMWA-1) (Polynucleobacter necessarius subsp. asymbioticus).